Consider the following 573-residue polypeptide: Flagellin B (573 aa).

It belongs to the bacterial flagellin family. In terms of assembly, heteromer of FlaA and FlaB. A flagellar filament composed exclusively of FlaA is indistinguishable in length from that of the wild-type and shows a slight reduction in motility. The flagellar filament composed exclusively of the FlaB is severely truncated in length and greatly reduced in motility. Thus, while both flagellins are not necessary for motility, both are required for a fully active flagellar filament.

It is found in the secreted. The protein localises to the bacterial flagellum. In terms of biological role, flagellin is the subunit protein which polymerizes to form the filaments of bacterial flagella. The chain is Flagellin B (flaB) from Campylobacter coli.